We begin with the raw amino-acid sequence, 294 residues long: ATP synthase gamma chain (294 aa).

The protein belongs to the ATPase gamma chain family. F-type ATPases have 2 components, CF(1) - the catalytic core - and CF(0) - the membrane proton channel. CF(1) has five subunits: alpha(3), beta(3), gamma(1), delta(1), epsilon(1). CF(0) has three main subunits: a, b and c.

The protein resides in the cell inner membrane. Functionally, produces ATP from ADP in the presence of a proton gradient across the membrane. The gamma chain is believed to be important in regulating ATPase activity and the flow of protons through the CF(0) complex. In Paraburkholderia xenovorans (strain LB400), this protein is ATP synthase gamma chain.